The primary structure comprises 315 residues: Ribosomal RNA small subunit methyltransferase H (315 aa).

Residues 33 to 35 (GGH), D52, F84, D106, and Q113 contribute to the S-adenosyl-L-methionine site.

It belongs to the methyltransferase superfamily. RsmH family.

The protein localises to the cytoplasm. The enzyme catalyses cytidine(1402) in 16S rRNA + S-adenosyl-L-methionine = N(4)-methylcytidine(1402) in 16S rRNA + S-adenosyl-L-homocysteine + H(+). Specifically methylates the N4 position of cytidine in position 1402 (C1402) of 16S rRNA. This chain is Ribosomal RNA small subunit methyltransferase H, found in Lactobacillus acidophilus (strain ATCC 700396 / NCK56 / N2 / NCFM).